The primary structure comprises 195 residues: Protein LIGHT-DEPENDENT SHORT HYPOCOTYLS 4 (195 aa).

Low complexity predominate over residues 28 to 38 (TTTSSSSSSSS). 2 disordered regions span residues 28–51 (TTTSSSSSSSSGGSGTNQLSRYEN) and 162–195 (SQAKARGISYEKKKRKRPPPPLPPAQPAISSSPN). One can recognise an ALOG domain in the interval 48–175 (RYENQKRRDW…ARGISYEKKK (128 aa)). Positions 173 to 177 (KKKRK) match the Nuclear localization signal motif.

It belongs to the plant homeotic and developmental regulators ALOG protein family. Induced by NAC054/CUC1 and NAC098/CUC2 in shoot organ boundary cells.

Its subcellular location is the nucleus. In terms of biological role, probable transcription regulator that acts as a developmental regulator by promoting cell growth in response to light. May suppress organ differentiation in the boundary region. The polypeptide is Protein LIGHT-DEPENDENT SHORT HYPOCOTYLS 4 (LSH4) (Arabidopsis thaliana (Mouse-ear cress)).